The chain runs to 239 residues: tRNA (guanine-N(7)-)-methyltransferase (239 aa).

Residues E69, E94, D121, and D144 each contribute to the S-adenosyl-L-methionine site. Residue D144 is part of the active site. A substrate-binding site is contributed by K148. Residues 150–155 form an interaction with RNA region; it reads RHNKRR. Substrate contacts are provided by residues D180 and 217 to 220; that span reads TKFE.

Belongs to the class I-like SAM-binding methyltransferase superfamily. TrmB family. As to quaternary structure, monomer.

It catalyses the reaction guanosine(46) in tRNA + S-adenosyl-L-methionine = N(7)-methylguanosine(46) in tRNA + S-adenosyl-L-homocysteine. It participates in tRNA modification; N(7)-methylguanine-tRNA biosynthesis. Catalyzes the formation of N(7)-methylguanine at position 46 (m7G46) in tRNA. The protein is tRNA (guanine-N(7)-)-methyltransferase of Shigella dysenteriae serotype 1 (strain Sd197).